A 620-amino-acid chain; its full sequence is Cell fusion protein cfr1 (620 aa).

In terms of domain architecture, Fibronectin type-III spans 79-169 (LPSPPVLKLK…KHITIKTLRM (91 aa)). The 90-residue stretch at 167–256 (LRMIDLTGIQ…RLVNVSGFYI (90 aa)) folds into the BRCT domain. 2 disordered regions span residues 287 to 566 (QPKN…PEKA) and 588 to 620 (KQSSEPTADDNLIPNKEAEIIQSSDEFESVNID). A compositionally biased stretch (polar residues) spans 303–314 (APQQTTQQGTQN). Low complexity predominate over residues 315–330 (SANAEPSSSASVPAEA). The span at 352–375 (SKPNEAPTSSENIKADQPENSTKQ) shows a compositional bias: polar residues. A compositionally biased stretch (basic and acidic residues) spans 382 to 392 (MQIKDAEEHSN). The span at 393 to 406 (LESTPAAQQTSEVE) shows a compositional bias: polar residues. Positions 424 to 434 (NVNEENNTPET) are enriched in low complexity. Residues 445–468 (NTAAESLINQEETTSGEAVTKSTV) show a composition bias toward polar residues. Over residues 472–484 (ANEEEAEPNEIIE) the composition is skewed to acidic residues. Over residues 506-515 (NNANSENANG) the composition is skewed to polar residues. A compositionally biased stretch (basic and acidic residues) spans 517–537 (TDEKIIEAPLDTKENSDDDKP).

This sequence belongs to the CHS5 family.

Its subcellular location is the golgi apparatus. Its function is as follows. Required for cell fusion, independently of fus1. Appears to have a role in transporting proteins that are involved in mating. May act as a scaffold to retain cell fusion proteins in the cisternae of the Golgi. Degraded at the onset of mating and this leads to release of cell fusion proteins. The polypeptide is Cell fusion protein cfr1 (cfr1) (Schizosaccharomyces pombe (strain 972 / ATCC 24843) (Fission yeast)).